The following is a 346-amino-acid chain: Heat-inducible transcription repressor HrcA (346 aa).

Belongs to the HrcA family.

Negative regulator of class I heat shock genes (grpE-dnaK-dnaJ and groELS operons). Prevents heat-shock induction of these operons. The protein is Heat-inducible transcription repressor HrcA of Fructilactobacillus sanfranciscensis (Lactobacillus sanfranciscensis).